The following is a 173-amino-acid chain: Crossover junction endodeoxyribonuclease RuvC (173 aa).

Residues D8, E67, and D139 contribute to the active site. Mg(2+) contacts are provided by D8, E67, and D139.

It belongs to the RuvC family. In terms of assembly, homodimer which binds Holliday junction (HJ) DNA. The HJ becomes 2-fold symmetrical on binding to RuvC with unstacked arms; it has a different conformation from HJ DNA in complex with RuvA. In the full resolvosome a probable DNA-RuvA(4)-RuvB(12)-RuvC(2) complex forms which resolves the HJ. Mg(2+) is required as a cofactor.

The protein resides in the cytoplasm. It catalyses the reaction Endonucleolytic cleavage at a junction such as a reciprocal single-stranded crossover between two homologous DNA duplexes (Holliday junction).. In terms of biological role, the RuvA-RuvB-RuvC complex processes Holliday junction (HJ) DNA during genetic recombination and DNA repair. Endonuclease that resolves HJ intermediates. Cleaves cruciform DNA by making single-stranded nicks across the HJ at symmetrical positions within the homologous arms, yielding a 5'-phosphate and a 3'-hydroxyl group; requires a central core of homology in the junction. The consensus cleavage sequence is 5'-(A/T)TT(C/G)-3'. Cleavage occurs on the 3'-side of the TT dinucleotide at the point of strand exchange. HJ branch migration catalyzed by RuvA-RuvB allows RuvC to scan DNA until it finds its consensus sequence, where it cleaves and resolves the cruciform DNA. This Serratia proteamaculans (strain 568) protein is Crossover junction endodeoxyribonuclease RuvC.